The primary structure comprises 225 residues: Lectin (225 aa).

Homotetramer.

Chitin-binding lectin. Agglutinates rabbit erythrocytes, but not human erythrocytes. The protein is Lectin of Vachellia farnesiana (Sweet acacia).